We begin with the raw amino-acid sequence, 230 residues long: Orotidine 5'-phosphate decarboxylase (230 aa).

Substrate is bound by residues Asp10, Lys31, Asp58 to Thr67, Thr117, Arg179, Gln188, Gly208, and Arg209. Lys60 (proton donor) is an active-site residue.

It belongs to the OMP decarboxylase family. Type 1 subfamily. In terms of assembly, homodimer.

It catalyses the reaction orotidine 5'-phosphate + H(+) = UMP + CO2. It participates in pyrimidine metabolism; UMP biosynthesis via de novo pathway; UMP from orotate: step 2/2. In terms of biological role, catalyzes the decarboxylation of orotidine 5'-monophosphate (OMP) to uridine 5'-monophosphate (UMP). This is Orotidine 5'-phosphate decarboxylase from Staphylococcus epidermidis (strain ATCC 35984 / DSM 28319 / BCRC 17069 / CCUG 31568 / BM 3577 / RP62A).